The sequence spans 1366 residues: DNA-directed RNA polymerase subunit beta' (1366 aa).

The interval 1-40 (MTSTSPKSRRSSGKGRKGSKKKGKQVSQIPPLSKTPPSFR) is disordered. The segment covering 7–24 (KSRRSSGKGRKGSKKKGK) has biased composition (basic residues). A compositionally biased stretch (polar residues) spans 25–38 (QVSQIPPLSKTPPS). Zn(2+) is bound by residues Cys250, Cys317, Cys324, and Cys327. A disordered region spans residues 1299–1366 (TAAKSTSVLD…LQEEGLLADE (68 aa)). A compositionally biased stretch (low complexity) spans 1353-1366 (ALEGLQEEGLLADE).

The protein belongs to the RNA polymerase beta' chain family. RpoC2 subfamily. In terms of assembly, in cyanobacteria the RNAP catalytic core is composed of 2 alpha, 1 beta, 1 beta', 1 gamma and 1 omega subunit. When a sigma factor is associated with the core the holoenzyme is formed, which can initiate transcription. Zn(2+) is required as a cofactor.

The catalysed reaction is RNA(n) + a ribonucleoside 5'-triphosphate = RNA(n+1) + diphosphate. In terms of biological role, DNA-dependent RNA polymerase catalyzes the transcription of DNA into RNA using the four ribonucleoside triphosphates as substrates. The protein is DNA-directed RNA polymerase subunit beta' of Prochlorococcus marinus (strain MIT 9211).